Consider the following 474-residue polypeptide: UDP-N-acetylmuramate--L-alanine ligase (474 aa).

ATP is bound at residue 116-122; sequence GTHGKTT.

Belongs to the MurCDEF family.

Its subcellular location is the cytoplasm. It catalyses the reaction UDP-N-acetyl-alpha-D-muramate + L-alanine + ATP = UDP-N-acetyl-alpha-D-muramoyl-L-alanine + ADP + phosphate + H(+). Its pathway is cell wall biogenesis; peptidoglycan biosynthesis. Its function is as follows. Cell wall formation. The polypeptide is UDP-N-acetylmuramate--L-alanine ligase (Hyphomonas neptunium (strain ATCC 15444)).